Consider the following 353-residue polypeptide: N-methyltransferase (353 aa).

S-adenosyl-L-homocysteine contacts are provided by Ser171, Ala195, Asp218, Asp238, and Lys252. An S-adenosyl-L-methionine-binding site is contributed by Asp218.

Belongs to the class I-like SAM-binding methyltransferase superfamily. Cation-independent O-methyltransferase family. In terms of assembly, homodimer. As to expression, expressed at high levels in all tissues.

The catalysed reaction is 3-methoxytyramine + S-adenosyl-L-methionine = N-methyl-3-methoxytyramine + S-adenosyl-L-homocysteine + H(+). The enzyme catalyses mescaline + S-adenosyl-L-methionine = N-methylmescaline + S-adenosyl-L-homocysteine + H(+). It carries out the reaction tyramine + S-adenosyl-L-methionine = N-methyltyramine + S-adenosyl-L-homocysteine + H(+). It catalyses the reaction 4-hydroxy-3,5-dimethoxyphenethylamine + S-adenosyl-L-methionine = N-methyl-4-hydroxy-3,5-dimethoxyphenethylamine + S-adenosyl-L-homocysteine + H(+). It participates in aromatic compound metabolism. Its pathway is alkaloid biosynthesis. Its function is as follows. N-methyltransferase participating in the biosynthesis of natural products derived from phenylethylamine, including mescaline, a natural hallucinogen potentially used in psychotherapeutic treatments. Catalyzes the N-methylation of many substrates, including 3-methoxytyramine, 5-hydroxy-3,4-dimethoxyphenethylamine, 4-hydroxy-3,5-dimethoxyphenethylamine, tyramine and mescaline. In Lophophora williamsii (Peyote), this protein is N-methyltransferase.